Consider the following 239-residue polypeptide: Ribitol-5-phosphate cytidylyltransferase (239 aa).

CTP-binding positions include 7-10 (FAGG) and 80-86 (GETGQMS).

Belongs to the IspD/TarI cytidylyltransferase family. TarI subfamily.

It carries out the reaction D-ribitol 5-phosphate + CTP + H(+) = CDP-L-ribitol + diphosphate. It participates in cell wall biogenesis; poly(ribitol phosphate) teichoic acid biosynthesis. In terms of biological role, catalyzes the transfer of the cytidylyl group of CTP to D-ribitol 5-phosphate. This is Ribitol-5-phosphate cytidylyltransferase from Streptococcus agalactiae serotype Ia (strain ATCC 27591 / A909 / CDC SS700).